A 195-amino-acid chain; its full sequence is NADH-quinone oxidoreductase subunit B (195 aa).

4 residues coordinate [4Fe-4S] cluster: Cys74, Cys75, Cys139, and Cys169.

The protein belongs to the complex I 20 kDa subunit family. NDH-1 is composed of 14 different subunits. Subunits NuoB, C, D, E, F, and G constitute the peripheral sector of the complex. It depends on [4Fe-4S] cluster as a cofactor.

It localises to the cell inner membrane. The enzyme catalyses a quinone + NADH + 5 H(+)(in) = a quinol + NAD(+) + 4 H(+)(out). Its function is as follows. NDH-1 shuttles electrons from NADH, via FMN and iron-sulfur (Fe-S) centers, to quinones in the respiratory chain. The immediate electron acceptor for the enzyme in this species is believed to be ubiquinone. Couples the redox reaction to proton translocation (for every two electrons transferred, four hydrogen ions are translocated across the cytoplasmic membrane), and thus conserves the redox energy in a proton gradient. This chain is NADH-quinone oxidoreductase subunit B, found in Methylobacterium radiotolerans (strain ATCC 27329 / DSM 1819 / JCM 2831 / NBRC 15690 / NCIMB 10815 / 0-1).